The chain runs to 561 residues: Asparagine synthetase [glutamine-hydrolyzing] (561 aa).

Catalysis depends on Cys-2, which acts as the For GATase activity. Residues 2-191 form the Glutamine amidotransferase type-2 domain; that stretch reads CGIWALFGSD…PGHYEVLDLK (190 aa). L-glutamine-binding positions include 49-53, 75-77, and Asp-97; these read RLAVV and NGE. Residues 213 to 536 enclose the Asparagine synthetase domain; sequence HALYDSVEKL…PGRADWLTHY (324 aa). ATP contacts are provided by residues Leu-256, Ile-288, and 363 to 364; that span reads SG. Position 385 is an N6-acetyllysine (Lys-385). Position 545 is a phosphothreonine (Thr-545). At Ser-557 the chain carries Phosphoserine.

The catalysed reaction is L-aspartate + L-glutamine + ATP + H2O = L-asparagine + L-glutamate + AMP + diphosphate + H(+). It functions in the pathway amino-acid biosynthesis; L-asparagine biosynthesis; L-asparagine from L-aspartate (L-Gln route): step 1/1. The sequence is that of Asparagine synthetase [glutamine-hydrolyzing] (ASNS) from Mesocricetus auratus (Golden hamster).